The following is a 408-amino-acid chain: Multidrug resistance protein MdtG (408 aa).

The next 10 helical transmembrane spans lie at 16-36 (LIVA…VMPF), 58-78 (IVFS…GGLA), 92-112 (LGMG…QFLI), 115-135 (ALLG…ATQV), 146-166 (TLST…GLLA), 173-193 (PVFF…LFCI), 224-244 (LFVT…ILTL), 256-276 (VAFI…LSAP), 290-310 (ILIT…YVQT), and 378-398 (AVFL…WNSL).

It belongs to the major facilitator superfamily. DHA1 family. MdtG (TC 2.A.1.2.20) subfamily.

Its subcellular location is the cell inner membrane. Confers resistance to fosfomycin and deoxycholate. This Escherichia coli O17:K52:H18 (strain UMN026 / ExPEC) protein is Multidrug resistance protein MdtG.